Consider the following 62-residue polypeptide: Large ribosomal subunit protein bL28 (62 aa).

This sequence belongs to the bacterial ribosomal protein bL28 family.

This Phytoplasma mali (strain AT) protein is Large ribosomal subunit protein bL28.